A 193-amino-acid polypeptide reads, in one-letter code: Allatostatin A (193 aa).

The first 25 residues, 1-25 (MKTSSLIAMRLIIFYLLSVVGRSTA), serve as a signal peptide directing secretion. A propeptide spanning residues 26 to 64 (AVEEAPASSLHIPRLNPLSSNLEYDEPSEKRAYAYISEY) is cleaved from the precursor. I74 carries the isoleucine amide modification. The propeptide occupies 78-84 (WIDNSED). Isoleucine amide occurs at positions 94 and 105. Positions 109–139 (NSGYRPLGMDFSVDNMDFHSREDNLDDFIDD) are excised as a propeptide. The residue at position 150 (I150) is an Isoleucine amide. S165 is modified (serine amide). A propeptide spanning residues 169–193 (LNDVVGPKYLLGLGKGLSENENLIQ) is cleaved from the precursor.

Belongs to the allatostatin family. Allatostatins A1, A2 and A3 are expressed in brain, antennal lobes, optical lobes, gnathal ganglia, the retrocerebral complex and thoracic, abdominal and ventral ganglia. Allatostain A4 is expressed in brain (at protein level).

It is found in the secreted. May act as a neurotransmitter or neuromodulator. This Camponotus floridanus (Florida carpenter ant) protein is Allatostatin A.